The following is a 1266-amino-acid chain: Rho GTPase-activating protein 29 (1266 aa).

Phosphoserine occurs at positions 171, 176, 179, and 190. In terms of domain architecture, F-BAR spans 192–462 (IELDNLLLKN…SAKLYDPGQE (271 aa)). Positions 296 to 418 (RKNEMEKQRK…EILTQLRTLV (123 aa)) form a coiled coil. A disordered region spans residues 482–501 (NVNKQMTNSPQTSGYEPADS). Residues 483 to 495 (VNKQMTNSPQTSG) show a composition bias toward polar residues. 3 positions are modified to phosphoserine: Ser-501, Ser-521, and Ser-554. A compositionally biased stretch (low complexity) spans 542–561 (DSESTGGSSESRSLDSESIS). The tract at residues 542–601 (DSESTGGSSESRSLDSESISPGDFHRKLPRTPSSGTMSSADDLDEREPPSPSEAGPNSLG) is disordered. The Phorbol-ester/DAG-type zinc-finger motif lies at 614–659 (THKFRKLRSPTKCRDCDGIVMFPGVECEECLLVCHRKCLENLVIIC). Residues 673–888 (AEFIQVAKKE…FLITYSQKIF (216 aa)) form the Rho-GAP domain. A phosphoserine mark is found at Ser-920, Ser-956, and Ser-1028. Disordered regions lie at residues 1039-1081 (SSPT…KVNG), 1116-1157 (GLTV…ATAV), and 1209-1266 (KSDP…PQFV). The segment covering 1072 to 1081 (SNTTRSKVNG) has biased composition (polar residues). Basic and acidic residues predominate over residues 1124–1136 (NRDHPGSKAHAEP). Ser-1149 and Ser-1151 each carry phosphoserine. Acidic residues predominate over residues 1256–1266 (EDLEDEIPQFV). The interval 1263–1266 (PQFV) is interaction with PTPN13/PTPL1.

Interacts with PTPN13/PTPL1. Interacts with RAP2A via its coiled coil domain. Interacts with RASIP1.

In terms of biological role, GTPase activator for the Rho-type GTPases by converting them to an inactive GDP-bound state. Has strong activity toward RHOA, and weaker activity toward RAC1 and CDC42. May act as a specific effector of RAP2A to regulate Rho. In concert with RASIP1, suppresses RhoA signaling and dampens ROCK and MYH9 activities in endothelial cells and plays an essential role in blood vessel tubulogenesis. This Mus musculus (Mouse) protein is Rho GTPase-activating protein 29 (Arhgap29).